A 50-amino-acid chain; its full sequence is Protease inhibitor 2 (50 aa).

The region spanning 2 to 50 is the Kazal-like domain; it reads EDCVGRKACTREWYPVCGSDGVTYSNPCNFSAQQEQCDPNITIAHMGEC. Disulfide bonds link C10/C29 and C18/C50. Residues N30 and N41 are each glycosylated (N-linked (GlcNAc...) asparagine).

Serine protease inhibitor. Strongly inhibits human neutrophil elastase and trypsin, also inhibits porcine pancreatic elastase and subtilisin A. Does not inhibit chymotrypsin, plasma kallikrein, pancreatic kallikrein, thrombin or papain. In Cenchritis muricatus (Beaded periwinkle), this protein is Protease inhibitor 2.